We begin with the raw amino-acid sequence, 296 residues long: NAD kinase (296 aa).

Catalysis depends on D72, which acts as the Proton acceptor. NAD(+)-binding positions include 72-73 (DG), 146-147 (ND), R157, K174, D176, 187-192 (TAYALS), and Q247.

It belongs to the NAD kinase family. A divalent metal cation is required as a cofactor.

The protein localises to the cytoplasm. The enzyme catalyses NAD(+) + ATP = ADP + NADP(+) + H(+). In terms of biological role, involved in the regulation of the intracellular balance of NAD and NADP, and is a key enzyme in the biosynthesis of NADP. Catalyzes specifically the phosphorylation on 2'-hydroxyl of the adenosine moiety of NAD to yield NADP. In Pseudomonas putida (strain W619), this protein is NAD kinase.